A 454-amino-acid chain; its full sequence is G2/mitotic-specific cyclin S13-6 (454 aa).

Polar residues predominate over residues 1 to 11 (MASRIVQQQQA). Disordered regions lie at residues 1 to 35 (MASRIVQQQQARGEAVVGGGKQQKKNGVADGRNRK) and 108 to 155 (PVSK…QHTL). Residues 118–147 (KPSEKVTDIDASPDKKEVLKDKKKEGDANP) are compositionally biased toward basic and acidic residues.

It belongs to the cyclin family. Cyclin AB subfamily. In terms of assembly, interacts with the CDC2 protein kinase to form a serine/threonine kinase holoenzyme complex also known as maturation promoting factor (MPF). The cyclin subunit imparts substrate specificity to the complex.

Functionally, essential for the control of the cell cycle at the G2/M (mitosis) transition. This Glycine max (Soybean) protein is G2/mitotic-specific cyclin S13-6.